The following is a 150-amino-acid chain: 3-dehydroquinate dehydratase (150 aa).

Tyr-26 serves as the catalytic Proton acceptor. The substrate site is built by Asn-77, His-83, and Asp-90. The active-site Proton donor is the His-103. Substrate is bound by residues 104 to 105 and Arg-114; that span reads LS.

It belongs to the type-II 3-dehydroquinase family. In terms of assembly, homododecamer.

It carries out the reaction 3-dehydroquinate = 3-dehydroshikimate + H2O. It participates in metabolic intermediate biosynthesis; chorismate biosynthesis; chorismate from D-erythrose 4-phosphate and phosphoenolpyruvate: step 3/7. Functionally, catalyzes a trans-dehydration via an enolate intermediate. This chain is 3-dehydroquinate dehydratase, found in Citrobacter koseri (strain ATCC BAA-895 / CDC 4225-83 / SGSC4696).